The primary structure comprises 950 residues: Valine--tRNA ligase (950 aa).

The short motif at 40-50 (PNVTGSLHMGH) is the 'HIGH' region element. The short motif at 551–555 (KMSKS) is the 'KMSKS' region element. K554 is a binding site for ATP. Residues 881–950 (LIDKSAELGR…AEQRQKIAAL (70 aa)) adopt a coiled-coil conformation.

This sequence belongs to the class-I aminoacyl-tRNA synthetase family. ValS type 1 subfamily. As to quaternary structure, monomer.

It is found in the cytoplasm. It catalyses the reaction tRNA(Val) + L-valine + ATP = L-valyl-tRNA(Val) + AMP + diphosphate. Its function is as follows. Catalyzes the attachment of valine to tRNA(Val). As ValRS can inadvertently accommodate and process structurally similar amino acids such as threonine, to avoid such errors, it has a 'posttransfer' editing activity that hydrolyzes mischarged Thr-tRNA(Val) in a tRNA-dependent manner. The chain is Valine--tRNA ligase from Pseudomonas aeruginosa (strain ATCC 15692 / DSM 22644 / CIP 104116 / JCM 14847 / LMG 12228 / 1C / PRS 101 / PAO1).